We begin with the raw amino-acid sequence, 568 residues long: Sulfite reductase [NADPH] hemoprotein beta-component (568 aa).

Residues C426, C432, C471, and C475 each contribute to the [4Fe-4S] cluster site. C475 contributes to the siroheme binding site.

This sequence belongs to the nitrite and sulfite reductase 4Fe-4S domain family. Alpha(8)-beta(8). The alpha component is a flavoprotein, the beta component is a hemoprotein. It depends on siroheme as a cofactor. [4Fe-4S] cluster serves as cofactor.

It carries out the reaction hydrogen sulfide + 3 NADP(+) + 3 H2O = sulfite + 3 NADPH + 4 H(+). It participates in sulfur metabolism; hydrogen sulfide biosynthesis; hydrogen sulfide from sulfite (NADPH route): step 1/1. Component of the sulfite reductase complex that catalyzes the 6-electron reduction of sulfite to sulfide. This is one of several activities required for the biosynthesis of L-cysteine from sulfate. In Xylella fastidiosa (strain M23), this protein is Sulfite reductase [NADPH] hemoprotein beta-component.